The primary structure comprises 135 residues: Transcriptional regulator HosA (135 aa).

The HTH marR-type domain maps to 4-134; it reads RNKAFHQLRQ…FMQLVRKMMN (131 aa). The segment at residues 48–71 is a DNA-binding region (H-T-H motif); the sequence is QVALIEAAVSTKATLAEMLARMEN.

Involved in the temperature-dependent positive control of flagellum-driven swimming motility and cellular aggregation. Regulates fliC expression by directly interacting with fliC promoter. In Escherichia coli O127:H6 (strain E2348/69 / EPEC), this protein is Transcriptional regulator HosA (hosA).